A 357-amino-acid chain; its full sequence is Peptide chain release factor 1 (357 aa).

Gln-234 carries the post-translational modification N5-methylglutamine.

Belongs to the prokaryotic/mitochondrial release factor family. In terms of processing, methylated by PrmC. Methylation increases the termination efficiency of RF1.

It localises to the cytoplasm. Functionally, peptide chain release factor 1 directs the termination of translation in response to the peptide chain termination codons UAG and UAA. The polypeptide is Peptide chain release factor 1 (Nocardioides sp. (strain ATCC BAA-499 / JS614)).